Here is a 207-residue protein sequence, read N- to C-terminus: Outer-membrane lipoprotein LolB (207 aa).

The N-terminal stretch at 1–21 is a signal peptide; it reads MPMRKRHFYRLLPLASLLLAA. Cysteine 22 carries the N-palmitoyl cysteine lipid modification. Cysteine 22 carries S-diacylglycerol cysteine lipidation.

This sequence belongs to the LolB family. Monomer.

The protein resides in the cell outer membrane. Functionally, plays a critical role in the incorporation of lipoproteins in the outer membrane after they are released by the LolA protein. The protein is Outer-membrane lipoprotein LolB of Yersinia pseudotuberculosis serotype O:1b (strain IP 31758).